We begin with the raw amino-acid sequence, 265 residues long: Mlc titration factor A (265 aa).

Positions 111, 148, 152, and 211 each coordinate Zn(2+).

This sequence belongs to the MtfA family. In terms of assembly, interacts with Mlc with high affinity. Zn(2+) serves as cofactor.

It localises to the cytoplasm. Its activity is regulated as follows. Proteolytic activity is stimulated by interaction with Mlc. Addition of the chelators EDTA or phenanthroline significantly reduces the peptidase activity, whereas the addition of other protease inhibitors has much less effect. In terms of biological role, involved in the modulation of the activity of the glucose-phosphotransferase system (glucose-PTS). Interacts with the transcriptional repressor Mlc, preventing its interaction with DNA and leading to the modulation of expression of genes regulated by Mlc, including ptsG, which encodes the PTS system glucose-specific EIICB component. Shows zinc-dependent metallopeptidase activity. In vitro, can cleave several artificial substrates. The greatest activity and specificity is observed for L-alanine fused to 4-nitroanilide (L-alanine-pNA). Shows significantly lower activity towards L-arginine-pNA, L-proline-pNA, hippuryl-L-phenylalanine and hippuryl-L-arginine, and cannot use FTC-casein. Mlc does not appear to be a biologically relevant peptidase substrate. Biologically relevant targets may have a function in growth transition under changing environmental conditions. This Escherichia coli (strain K12) protein is Mlc titration factor A.